The sequence spans 200 residues: Pyrrolidone-carboxylate peptidase (200 aa).

Residues E78, C141, and H165 contribute to the active site.

It belongs to the peptidase C15 family. Homotetramer.

The protein resides in the cytoplasm. The enzyme catalyses Release of an N-terminal pyroglutamyl group from a polypeptide, the second amino acid generally not being Pro.. Removes 5-oxoproline from various penultimate amino acid residues except L-proline. The sequence is that of Pyrrolidone-carboxylate peptidase from Lactobacillus helveticus (strain DPC 4571).